The chain runs to 538 residues: MAVAAAAAAAGPAGAGGGRAQRSGLLEVLVRDRWHKVLVNLSEDALVLSSEEGAAAYNGIGTATNGSFCRGAGAGHPGAGGAQPPDSPAGVRTAFTDLPEQVPESISNQKRGVKVLKQELGGLGISIKGGKENKMPILISKIFKGLAADQTQALYVGDAILSVNGADLRDATHDEAVQALKRAGKEVLLEVKYMREATPYVKKGSPVSEIGWETPPPESPRLGGSTSDPPSSQSFSFHRDRKSIPLKMCYVTRSMALADPENRQLEIHSPDAKHTVILRSKDSATAQAWFSAIHSNVNDLLTRVIAEVREQLGKTGIAGSREIRHLGWLAEKVPGESKKQWKPALVVLTEKDLLIYDSMPRRKEAWFSPVHTYPLLATRLVHSGPGKGSPQAGVDLSFATRTGTRQGIETHLFRAETSRDLSHWTRSIVQGCHNSAELIAEISTACTYKNQECRLTIHYENGFSITTEPQEGAFPKTIIQSPYEKLKMSSDDGIRMLYLDFGGKDGEIQLDLHSCPKPIVFIIHSFLSAKITRLGLVA.

N-acetylalanine is present on Ala-2. PH domains lie at Arg-19 to Asn-298 and Glu-322 to His-433. 3 positions are modified to phosphoserine: Ser-87, Ser-126, and Ser-205. One can recognise a PDZ domain in the interval Gly-112 to Arg-195. Positions Ser-205 to Phe-237 are disordered. A Phosphothreonine modification is found at Thr-214. 4 positions are modified to phosphoserine: Ser-219, Ser-232, Ser-236, and Ser-389. Over residues Ser-225–Ser-236 the composition is skewed to low complexity. Residues Pro-482–Ala-538 enclose the SU domain. The interval Pro-518–Ala-538 is calmodulin-binding.

The protein belongs to the syntrophin family. In terms of assembly, monomer and homodimer. Interacts with the other members of the syntrophin family SNTA1 and SNTB2; with the sodium channel proteins SCN4A and SCN5A. Interacts with the viral HTLV-1 TAX protein and with dystrophin protein DMD and related proteins DTNA and UTRN. Interacts with DTNB. Phosphorylated by CaM-kinase II. In terms of tissue distribution, ubiquitous.

The protein resides in the cell membrane. Its subcellular location is the sarcolemma. It is found in the cell junction. The protein localises to the cytoplasm. It localises to the cytoskeleton. Its function is as follows. Adapter protein that binds to and probably organizes the subcellular localization of a variety of membrane proteins. May link various receptors to the actin cytoskeleton and the dystrophin glycoprotein complex. In Homo sapiens (Human), this protein is Beta-1-syntrophin (SNTB1).